The chain runs to 301 residues: Ribosomal protein L11 methyltransferase (301 aa).

Thr152, Gly173, Asp195, and Asn236 together coordinate S-adenosyl-L-methionine.

This sequence belongs to the methyltransferase superfamily. PrmA family.

It localises to the cytoplasm. It carries out the reaction L-lysyl-[protein] + 3 S-adenosyl-L-methionine = N(6),N(6),N(6)-trimethyl-L-lysyl-[protein] + 3 S-adenosyl-L-homocysteine + 3 H(+). Methylates ribosomal protein L11. The protein is Ribosomal protein L11 methyltransferase of Dictyoglomus thermophilum (strain ATCC 35947 / DSM 3960 / H-6-12).